A 95-amino-acid chain; its full sequence is Mitochondrial import inner membrane translocase subunit Tim13 (95 aa).

The short motif at 46-69 is the Twin CX3C motif element; sequence CFKKCIGKPGSTLDNSEQKCIAMC. Disulfide bonds link Cys-46–Cys-69 and Cys-50–Cys-65.

The protein belongs to the small Tim family. As to quaternary structure, heterohexamer; composed of 3 copies of TIMM8 (TIMM8A or TIMM8B) and 3 copies of TIMM13, named soluble 70 kDa complex. Associates with the TIM22 complex, whose core is composed of TIMM22.

Its subcellular location is the mitochondrion inner membrane. In terms of biological role, mitochondrial intermembrane chaperone that participates in the import and insertion of some multi-pass transmembrane proteins into the mitochondrial inner membrane. Also required for the transfer of beta-barrel precursors from the TOM complex to the sorting and assembly machinery (SAM complex) of the outer membrane. Acts as a chaperone-like protein that protects the hydrophobic precursors from aggregation and guide them through the mitochondrial intermembrane space. The TIMM8-TIMM13 complex mediates the import of some proteins while the predominant TIMM9-TIMM10 70 kDa complex mediates the import of much more proteins. This Danio rerio (Zebrafish) protein is Mitochondrial import inner membrane translocase subunit Tim13 (timm13).